A 944-amino-acid chain; its full sequence is ATP-dependent helicase fft1 (944 aa).

2 disordered regions span residues 89–109 (AAYDPHDQPPERDVSLKESSN) and 174–246 (SAQK…NSIP). The span at 92 to 108 (DPHDQPPERDVSLKESS) shows a compositional bias: basic and acidic residues. A compositionally biased stretch (polar residues) spans 174–184 (SAQKLNNQPIE). Residues 186–203 (SSVDKENAKRKRYVEEGT) show a composition bias toward basic and acidic residues. A compositionally biased stretch (acidic residues) spans 217–227 (LSDEETNEDDL). Positions 230–246 (QSPTACTTDANIDNSIP) are enriched in polar residues. The Helicase ATP-binding domain maps to 426–592 (CLMYKAKLSG…ISLLAFMLPK (167 aa)). ATP is bound at residue 439–446 (DEMGLGKT). Residues 543-546 (DEGH) carry the DEGH box motif. The 158-residue stretch at 766–923 (KVKKLCSLLK…DSEKIQKEIS (158 aa)) folds into the Helicase C-terminal domain.

The protein belongs to the SNF2/RAD54 helicase family.

It is found in the nucleus. It carries out the reaction ATP + H2O = ADP + phosphate + H(+). In terms of biological role, DNA helicase that possesses intrinsic ATP-dependent nucleosome-remodeling activity and is required for heterochromatin organization. The protein is ATP-dependent helicase fft1 (fft1) of Schizosaccharomyces pombe (strain 972 / ATCC 24843) (Fission yeast).